A 277-amino-acid polypeptide reads, in one-letter code: Basic leucine zipper transcriptional factor ATF-like 2 (277 aa).

3 disordered regions span residues 15-50, 126-146, and 191-256; these read LGES…HQQH, FQTP…CSHE, and SFSK…QKSS. Residues 18–81 form the bZIP domain; the sequence is SQKQLKKKQK…AGWGRTLHLH (64 aa). The interval 20-42 is basic motif; it reads KQLKKKQKNRVAAQRSRQKHTSK. The span at 41 to 50 shows a compositional bias: basic and acidic residues; that stretch reads SKADALHQQH. The leucine-zipper stretch occupies residues 46 to 67; it reads LHQQHESLEKQNHALRKEIQAL. Composition is skewed to polar residues over residues 213–227 and 247–256; these read RQEQ…SSDS and GSSTHWQKSS.

Belongs to the bZIP family. In terms of assembly, heterodimer; heterodimerizes with JUN family proteins.

The protein localises to the nucleus. Functionally, AP-1 family transcription factor that controls the differentiation of lineage-specific cells in the immune system. Selectively suppresses CCN1 transcription and hence blocks the downstream cell proliferation signals produced by CCN1 and inhibits CCN1-induced anchorage-independent growth and invasion in several cancer types. Possibly acts by interfering with AP-1 binding to CCN1 promoter. Following infection, participates in the differentiation of CD8(+) thymic conventional dendritic cells in the immune system. Acts via the formation of a heterodimer with JUN family proteins that recognizes and binds DNA sequence 5'-TGA[CG]TCA-3' and regulates expression of target genes. The chain is Basic leucine zipper transcriptional factor ATF-like 2 (Batf2) from Mus musculus (Mouse).